The sequence spans 928 residues: Protein Niban 1 (928 aa).

Glycine 2 is lipidated: N-myristoyl glycine. Residues serine 579, serine 582, serine 596, serine 602, and serine 646 each carry the phosphoserine modification. Residues 580–596 (VSSLTDLKPPTGSNQAS) are compositionally biased toward polar residues. A disordered region spans residues 580–600 (VSSLTDLKPPTGSNQASPARR). 2 disordered regions span residues 618–654 (VFQESEEEKQPEVPSSLAKGESLSLPGPSPPPDGTEQ) and 669–707 (ATEDTAGLPGTCSSELEFGGTLEDEEPAQEEPEPITASG). The span at 690–701 (LEDEEPAQEEPE) shows a compositional bias: acidic residues. At serine 708 the chain carries Phosphoserine. 2 disordered regions span residues 723–877 (PVDS…ATAS) and 899–928 (PNPDVLLSHKDDVKEGEGGQESFPELPSEE). The span at 801–818 (GGLTEEPLGPMEGELPGE) shows a compositional bias: low complexity. Basic and acidic residues predominate over residues 825–834 (HEGRGGKCTE). The span at 865–877 (MGGQSSAAQATAS) shows a compositional bias: low complexity. Residues 905-915 (LSHKDDVKEGE) are compositionally biased toward basic and acidic residues. Residue serine 926 is modified to Phosphoserine.

Belongs to the Niban family. In terms of tissue distribution, expressed in various types of thyroid tumor such as papillary thyroid carcinomas and oxyphilic thyroid tumors but not in normal thyroid tissue (at protein level). Strongly expressed in heart, skeletal muscle, pancreas, white blood cells and prostate with moderate expression in colon and spleen. Expressed in renal carcinoma cells but not in normal kidney.

The protein localises to the cytoplasm. It localises to the membrane. Functionally, regulates phosphorylation of a number of proteins involved in translation regulation including EIF2A, EIF4EBP1 and RPS6KB1. May be involved in the endoplasmic reticulum stress response. The chain is Protein Niban 1 from Homo sapiens (Human).